Here is a 121-residue protein sequence, read N- to C-terminus: Histone H2B (121 aa).

The interval 1–27 (MAPKKAPAAAEKKVKKAPTTEKKNKKK) is disordered. N,N,N-trimethylalanine is present on Ala2. Lys5 and Lys41 each carry N6-acetyllysine. Lys115 is covalently cross-linked (Glycyl lysine isopeptide (Lys-Gly) (interchain with G-Cter in ubiquitin)).

The protein belongs to the histone H2B family. In terms of assembly, the nucleosome is a histone octamer containing two molecules each of H2A, H2B, H3 and H4 assembled in one H3-H4 heterotetramer and two H2A-H2B heterodimers. The octamer wraps approximately 147 bp of DNA. Monoubiquitination of Lys-115 gives a specific tag for epigenetic transcriptional activation and is also prerequisite for histone H3 'Lys-4' and 'Lys-79' methylation. Post-translationally, acetylation occurs almost exclusively in the MAC.

It localises to the nucleus. The protein localises to the chromosome. In terms of biological role, core component of nucleosome. Nucleosomes wrap and compact DNA into chromatin, limiting DNA accessibility to the cellular machineries which require DNA as a template. Histones thereby play a central role in transcription regulation, DNA repair, DNA replication and chromosomal stability. DNA accessibility is regulated via a complex set of post-translational modifications of histones, also called histone code, and nucleosome remodeling. In Tetrahymena pyriformis, this protein is Histone H2B.